Here is a 395-residue protein sequence, read N- to C-terminus: Phosphopentomutase (395 aa).

Residues Asp10, Asp294, His299, Asp335, His336, and His347 each contribute to the Mn(2+) site.

The protein belongs to the phosphopentomutase family. Mn(2+) serves as cofactor.

Its subcellular location is the cytoplasm. It catalyses the reaction 2-deoxy-alpha-D-ribose 1-phosphate = 2-deoxy-D-ribose 5-phosphate. The catalysed reaction is alpha-D-ribose 1-phosphate = D-ribose 5-phosphate. The protein operates within carbohydrate degradation; 2-deoxy-D-ribose 1-phosphate degradation; D-glyceraldehyde 3-phosphate and acetaldehyde from 2-deoxy-alpha-D-ribose 1-phosphate: step 1/2. In terms of biological role, isomerase that catalyzes the conversion of deoxy-ribose 1-phosphate (dRib-1-P) and ribose 1-phosphate (Rib-1-P) to deoxy-ribose 5-phosphate (dRib-5-P) and ribose 5-phosphate (Rib-5-P), respectively. This chain is Phosphopentomutase, found in Actinobacillus succinogenes (strain ATCC 55618 / DSM 22257 / CCUG 43843 / 130Z).